Reading from the N-terminus, the 76-residue chain is UPF0248 protein MMP0286 (76 aa).

It belongs to the UPF0248 family.

This Methanococcus maripaludis (strain DSM 14266 / JCM 13030 / NBRC 101832 / S2 / LL) protein is UPF0248 protein MMP0286.